Consider the following 215-residue polypeptide: Orotate phosphoribosyltransferase (215 aa).

Residue lysine 26 participates in 5-phospho-alpha-D-ribose 1-diphosphate binding. 34–35 (FF) contacts orotate. 5-phospho-alpha-D-ribose 1-diphosphate is bound by residues 72–73 (YK), arginine 99, lysine 100, lysine 103, histidine 105, and 124–132 (DDVITAGTA). Orotate is bound by residues threonine 128 and arginine 156.

This sequence belongs to the purine/pyrimidine phosphoribosyltransferase family. PyrE subfamily. Homodimer. Mg(2+) serves as cofactor.

It catalyses the reaction orotidine 5'-phosphate + diphosphate = orotate + 5-phospho-alpha-D-ribose 1-diphosphate. The protein operates within pyrimidine metabolism; UMP biosynthesis via de novo pathway; UMP from orotate: step 1/2. Functionally, catalyzes the transfer of a ribosyl phosphate group from 5-phosphoribose 1-diphosphate to orotate, leading to the formation of orotidine monophosphate (OMP). This Hahella chejuensis (strain KCTC 2396) protein is Orotate phosphoribosyltransferase.